We begin with the raw amino-acid sequence, 788 residues long: LPS-assembly protein LptD (788 aa).

A signal peptide spans 1–24; sequence MKKRFPTLLATLIWTALYSQHTLA.

It belongs to the LptD family. Component of the lipopolysaccharide transport and assembly complex. Interacts with LptE and LptA.

The protein localises to the cell outer membrane. Together with LptE, is involved in the assembly of lipopolysaccharide (LPS) at the surface of the outer membrane. The chain is LPS-assembly protein LptD from Yersinia enterocolitica serotype O:8 / biotype 1B (strain NCTC 13174 / 8081).